The sequence spans 689 residues: Acetyl-coenzyme A synthetase 2-like, mitochondrial (689 aa).

The N-terminal 37 residues, methionine 1–alanine 37, are a transit peptide targeting the mitochondrion. The disordered stretch occupies residues leucine 17–proline 46. Residues serine 32–proline 46 are compositionally biased toward low complexity. Residues arginine 224 to arginine 227 and threonine 341 each bind CoA. Lysine 396 is subject to N6-acetyllysine. ATP contacts are provided by residues glycine 417–proline 419, aspartate 441–threonine 446, aspartate 533, and arginine 548. Serine 556 contributes to the CoA binding site. Arginine 559 is a binding site for ATP. Lysine 642 carries the N6-acetyllysine modification.

Belongs to the ATP-dependent AMP-binding enzyme family. In terms of assembly, interacts with SIRT3. Post-translationally, reversibly acetylated on Lys-642. The acetyl-CoA synthase activity is inhibited by acetylation and activated by deacetylation mediated by the deacetylase SIRT3.

The protein localises to the mitochondrion matrix. The enzyme catalyses acetate + ATP + CoA = acetyl-CoA + AMP + diphosphate. The catalysed reaction is propanoate + ATP + CoA = propanoyl-CoA + AMP + diphosphate. With respect to regulation, inhibited by acetylation at Lys-642 and activated by deacetylation mediated by the deacetylase SIRT3. Its function is as follows. Catalyzes the synthesis of acetyl-CoA from short-chain fatty acids. Acetate is the preferred substrate. Can also utilize propionate with a much lower affinity. Provides acetyl-CoA that is utilized mainly for oxidation under ketogenic conditions. Involved in thermogenesis under ketogenic conditions, using acetate as a vital fuel when carbohydrate availability is insufficient. This Homo sapiens (Human) protein is Acetyl-coenzyme A synthetase 2-like, mitochondrial (ACSS1).